The sequence spans 813 residues: MARKSIRGKEVVMVSDDDDDDDDVDDDKNIIKCVKPLTVYKNLETPTDSDDNDDDDDDVDVDENIIKYIKPVAVYKKLETRSKNNPYFLRRSLKYIIQAKKKKKSNSGGKIRFNYRDVSNKMTLKAEVVENFSCPFCLIPCGGHEGLQLHLKSSHDAFKFEFYRAEKDHGPEVDVSVKSDTIKFGVLKDDVGNPQLSPLTFCSKNRNQRRQRDDSNNVKKLNVLLMELDLDDLPRGTENDSTHVNDDNVSSPPRAHSSEKISDILTTTQLAIAESSEPKVPHVNDGNVSSPPRAHSSAEKNESTHVNDDDDVSSPPRAHSLEKNESTHVNEDNISSPPKAHSSKKNESTHMNDEDVSFPPRTRSSKETSDILTTTQPAIVEPSEPKVRRGSRRKQLYAKRYKARETQPAIAESSEPKVLHVNDENVSSPPEAHSLEKASDILTTTQPAIAESSEPKVPHVNDENVSSTPRAHSSKKNKSTRKNVDNVPSPPKTRSSKKTSDILTTTQPTIAESSEPKVRHVNDDNVSSTPRAHSSKKNKSTRKNDDNIPSPPKTRSSKKTSNILTRTQPAIAESEPKVPHVNDDKVSSTPRAHSSKKNKSTHKKDDNASLPPKTRSSKKTSDILATTQPAKAEPSEPKVTRVSRRKELHAERCEAKRLERLKGRQFYHSQTMQPMTFEQVMSNEDSENETDDYALDISERLRLERLVGVSKEEKRYMYLWNIFVRKQRVIADGHVPWACEEFAKLHKEEMKNSSSFDWWWRMFRIKLWNNGLICAKTFHKCTTILLSNSDEAGQFTSGSAANANNQQSMEVDE.

Residues 1–27 are disordered; it reads MARKSIRGKEVVMVSDDDDDDDDVDDD. A compositionally biased stretch (acidic residues) spans 15–26; it reads SDDDDDDDDVDD. The C2H2-type zinc-finger motif lies at 134 to 155; that stretch reads CPFCLIPCGGHEGLQLHLKSSH. 3 disordered regions span residues 197 to 216, 232 to 261, and 274 to 648; these read SPLT…DDSN, DLPR…SEKI, and ESSE…RKEL. Over residues 232–246 the composition is skewed to basic and acidic residues; it reads DLPRGTENDSTHVND. One copy of the A-1 repeat lies at 243-264; sequence HVNDDNVSSPPRAHSSEKISDI. Residues 243–542 form a 12 X approximate repeat A region; it reads HVNDDNVSSP…HSSKKNKSTR (300 aa). The B-1 repeat unit spans residues 265–281; it reads LTTTQLAIAESSEPKVP. The 7 X approximate repeat B stretch occupies residues 265–640; that stretch reads LTTTQLAIAE…KAEPSEPKVT (376 aa). The stretch at 282–304 is one A-2 repeat; sequence HVNDGNVSSPPRAHSSAEKNEST. 3 stretches are compositionally biased toward basic and acidic residues: residues 296 to 307, 319 to 331, and 344 to 353; these read SSAEKNESTHVN, HSLE…HVNE, and KKNESTHMND. The stretch at 305–327 is one A-3 repeat; sequence HVNDDDDVSSPPRAHSLEKNEST. Residues 328-349 form an A-4 repeat; it reads HVNEDNISSPPKAHSSKKNEST. One copy of the A-5 repeat lies at 350-371; the sequence is HMNDEDVSFPPRTRSSKETSDI. Residues 372-388 form a B-2 repeat; it reads LTTTQPAIVEPSEPKVR. Residues 388–402 are compositionally biased toward basic residues; it reads RRGSRRKQLYAKRYK. A B-3 repeat occupies 403 to 419; that stretch reads ARETQPAIAESSEPKVL. 2 stretches are compositionally biased toward basic and acidic residues: residues 414-423 and 453-462; these read SEPKVLHVND and SEPKVPHVND. An A-6 repeat occupies 420–441; sequence HVNDENVSSPPEAHSLEKASDI. The B-4 repeat unit spans residues 442–458; sequence LTTTQPAIAESSEPKVP. Residues 459-481 form an A-7 repeat; sequence HVNDENVSSTPRAHSSKKNKSTR. Positions 472–481 are enriched in basic residues; the sequence is HSSKKNKSTR. An A-8 repeat occupies 482–502; sequence KNVDNVPSPPKTRSSKKTSDI. The segment covering 501–512 has biased composition (polar residues); that stretch reads DILTTTQPTIAE. A B-5 repeat occupies 503 to 519; that stretch reads LTTTQPTIAESSEPKVR. Residues 514 to 523 are compositionally biased toward basic and acidic residues; that stretch reads SEPKVRHVND. One copy of the A-9 repeat lies at 520 to 542; that stretch reads HVNDDNVSSTPRAHSSKKNKSTR. The A-10 repeat unit spans residues 543 to 563; the sequence is KNDDNIPSPPKTRSSKKTSNI. A B-6 repeat occupies 564 to 579; sequence LTRTQPAIAESEPKVP. Positions 574–586 are enriched in basic and acidic residues; sequence SEPKVPHVNDDKV. Residues 580-601 form an A-11 repeat; that stretch reads HVNDDKVSSTPRAHSSKKNKST. Positions 593-602 are enriched in basic residues; the sequence is HSSKKNKSTH. One copy of the A-12 repeat lies at 602-623; it reads HKKDDNASLPPKTRSSKKTSDI. One copy of the B-7 repeat lies at 624–640; the sequence is LATTQPAKAEPSEPKVT. The VEFS-box stretch occupies residues 648–783; it reads LHAERCEAKR…CAKTFHKCTT (136 aa).

The protein belongs to the VEFS (VRN2-EMF2-FIS2-SU(Z)12) family. As to quaternary structure, probably indirectly associated with FIE and/or MEA. In plants, PcG complexes are probably composed of a member of the EZ family (CLF or MEA), FIE, and a member of the VEFS family (FIS2, VRN2 or EMF2). In terms of tissue distribution, weakly expressed. Expressed in late siliques.

The protein resides in the nucleus. In terms of biological role, polycomb group (PcG) protein. PcG proteins act by forming multiprotein complexes, which are required to maintain the transcriptionally repressive state of homeotic genes throughout development. PcG proteins are not required to initiate repression, but to maintain it during later stages of development. They probably act via the methylation of histones, rendering chromatin heritably changed in its expressibility. Required to prevent the proliferation of the central cell by repressing unknown target genes before fertilization. Regulates the anteroposterior organization of the endosperm. This Arabidopsis thaliana (Mouse-ear cress) protein is Polycomb group protein FERTILIZATION-INDEPENDENT SEED 2.